A 411-amino-acid polypeptide reads, in one-letter code: Corticotropin-releasing factor receptor 2 (411 aa).

The not cleaved signal peptide spans 1–19 (MDAALLLSLLEANCSLALA). Residues 1-108 (MDAALLLSLL…EPILDDKQRK (108 aa)) are Extracellular-facing. N-linked (GlcNAc...) asparagine glycosylation is found at Asn13, Asn41, Asn74, Asn86, and Asn94. 3 disulfide bridges follow: Cys14-Cys50, Cys40-Cys83, and Cys64-Cys98. A helical transmembrane segment spans residues 109-139 (YDLHYRIALIINYLGHCVSVVALVAAFLLFL). The Cytoplasmic segment spans residues 140–146 (VLRSIRC). The chain crosses the membrane as a helical span at residues 147–171 (LRNVIHWNLITTFILRNITWFLLQL). Residues 172 to 185 (IDHEVHEGNEVWCR) are Extracellular-facing. Residues Cys184 and Cys254 are joined by a disulfide bond. The helical transmembrane segment at 186–214 (CVTTIFNYFVVTNFFWMFVEGCYLHTAIV) threads the bilayer. At 215-221 (MTYSTEH) the chain is on the cytoplasmic side. The helical transmembrane segment at 222-249 (LRKWLFLFIGWCIPCPIIVAWAVGKLYY) threads the bilayer. The Extracellular portion of the chain corresponds to 250 to 265 (ENEQCWFGKEPGDLVD). The helical transmembrane segment at 266–291 (YIYQGPIILVLLINFVFLFNIVRILM) threads the bilayer. Topologically, residues 292–302 (TKLRASTTSET) are cytoplasmic. A helical membrane pass occupies residues 303–327 (IQYRKAVKATLVLLPLLGITYMLFF). Residues 328 to 334 (VNPGEDD) lie on the Extracellular side of the membrane. The helical transmembrane segment at 335–364 (LSQIVFIYFNSFLQSFQGFFVSVFYCFFNG) threads the bilayer. Residues 365-411 (EVRSALRKRWHRWQDHHALRVPVARAMSIPTSPTRISFHSIKQTAAV) lie on the Cytoplasmic side of the membrane.

The protein belongs to the G-protein coupled receptor 2 family. As to quaternary structure, monomer. Interacts (via N-terminal extracellular domain) with CRF, UCN, UCN2 and UCN3. An N-glycosylation site within the signal peptide impedes its proper cleavage and function. As to expression, predominantly expressed in limbic regions of the brain such as the lateral septum, the entorhinal cortex, the hypothalamic ventromedial nucleus and several amygdaloid nuclei. Also detectable in lung, kidney and heart.

It is found in the cell membrane. Its function is as follows. G-protein coupled receptor for CRH (corticotropin-releasing factor), UCN (urocortin), UCN2 and UCN3. Has high affinity for UCN. Ligand binding causes a conformation change that triggers signaling via guanine nucleotide-binding proteins (G proteins) and down-stream effectors, such as adenylate cyclase. Promotes the activation of adenylate cyclase, leading to increased intracellular cAMP levels. This chain is Corticotropin-releasing factor receptor 2 (Crhr2), found in Rattus norvegicus (Rat).